The sequence spans 592 residues: Aspartate--tRNA(Asp/Asn) ligase (592 aa).

Glutamate 175 contacts L-aspartate. The segment at 199-202 (QLFK) is aspartate. Arginine 221 is a binding site for L-aspartate. ATP is bound by residues 221 to 223 (RDE) and glutamine 230. L-aspartate is bound at residue histidine 450. An ATP-binding site is contributed by glutamate 483. Arginine 490 contacts L-aspartate. ATP is bound at residue 535-538 (GLDR).

Belongs to the class-II aminoacyl-tRNA synthetase family. Type 1 subfamily. Homodimer.

The protein resides in the cytoplasm. It catalyses the reaction tRNA(Asx) + L-aspartate + ATP = L-aspartyl-tRNA(Asx) + AMP + diphosphate. Its function is as follows. Aspartyl-tRNA synthetase with relaxed tRNA specificity since it is able to aspartylate not only its cognate tRNA(Asp) but also tRNA(Asn). Reaction proceeds in two steps: L-aspartate is first activated by ATP to form Asp-AMP and then transferred to the acceptor end of tRNA(Asp/Asn). In Acinetobacter baylyi (strain ATCC 33305 / BD413 / ADP1), this protein is Aspartate--tRNA(Asp/Asn) ligase.